We begin with the raw amino-acid sequence, 197 residues long: Holliday junction branch migration complex subunit RuvA (197 aa).

The tract at residues 1 to 63 (MFDYIKGQLT…EDAHLLFGFH (63 aa)) is domain I. The interval 64–142 (TENEKDVFLK…TIPEGGQAQQ (79 aa)) is domain II. Residues 142–146 (QMPKA) form a flexible linker region. A domain III region spans residues 147-197 (KGNQQLDEAIEALLALGYKATELKKIRAFFEGTDDTAEQYIKSALKMLMKG).

This sequence belongs to the RuvA family. Homotetramer. Forms an RuvA(8)-RuvB(12)-Holliday junction (HJ) complex. HJ DNA is sandwiched between 2 RuvA tetramers; dsDNA enters through RuvA and exits via RuvB. An RuvB hexamer assembles on each DNA strand where it exits the tetramer. Each RuvB hexamer is contacted by two RuvA subunits (via domain III) on 2 adjacent RuvB subunits; this complex drives branch migration. In the full resolvosome a probable DNA-RuvA(4)-RuvB(12)-RuvC(2) complex forms which resolves the HJ.

Its subcellular location is the cytoplasm. The RuvA-RuvB-RuvC complex processes Holliday junction (HJ) DNA during genetic recombination and DNA repair, while the RuvA-RuvB complex plays an important role in the rescue of blocked DNA replication forks via replication fork reversal (RFR). RuvA specifically binds to HJ cruciform DNA, conferring on it an open structure. The RuvB hexamer acts as an ATP-dependent pump, pulling dsDNA into and through the RuvAB complex. HJ branch migration allows RuvC to scan DNA until it finds its consensus sequence, where it cleaves and resolves the cruciform DNA. This chain is Holliday junction branch migration complex subunit RuvA, found in Streptococcus uberis (strain ATCC BAA-854 / 0140J).